Reading from the N-terminus, the 147-residue chain is Transcriptional regulator MraZ (147 aa).

2 SpoVT-AbrB domains span residues 5-52 and 81-124; these read NHPT…PMEE and GQVV…NAEH.

It belongs to the MraZ family. As to quaternary structure, forms oligomers.

It is found in the cytoplasm. The protein localises to the nucleoid. This chain is Transcriptional regulator MraZ, found in Koribacter versatilis (strain Ellin345).